The sequence spans 527 residues: Probable protein kinase UbiB (527 aa).

A helical transmembrane segment spans residues 23-43 (ELLLELPLPFWLRALSWLLPW). The Protein kinase domain occupies 125–488 (RFDSQPLASA…ESDARDQWPL (364 aa)). Residues 131–139 (LASASVAQV) and Lys-153 contribute to the ATP site. Asp-288 acts as the Proton acceptor in catalysis. Residues 504-524 (LAPLLATWPAWLMVGGGLYLV) form a helical membrane-spanning segment.

Belongs to the ABC1 family. UbiB subfamily.

It localises to the cell inner membrane. It functions in the pathway cofactor biosynthesis; ubiquinone biosynthesis [regulation]. Is probably a protein kinase regulator of UbiI activity which is involved in aerobic coenzyme Q (ubiquinone) biosynthesis. The protein is Probable protein kinase UbiB of Ectopseudomonas mendocina (strain ymp) (Pseudomonas mendocina).